The sequence spans 364 residues: Cobalt-precorrin-5B C(1)-methyltransferase (364 aa).

It belongs to the CbiD family.

The catalysed reaction is Co-precorrin-5B + S-adenosyl-L-methionine = Co-precorrin-6A + S-adenosyl-L-homocysteine. It participates in cofactor biosynthesis; adenosylcobalamin biosynthesis; cob(II)yrinate a,c-diamide from sirohydrochlorin (anaerobic route): step 6/10. Catalyzes the methylation of C-1 in cobalt-precorrin-5B to form cobalt-precorrin-6A. The chain is Cobalt-precorrin-5B C(1)-methyltransferase from Pseudomonas putida (strain ATCC 47054 / DSM 6125 / CFBP 8728 / NCIMB 11950 / KT2440).